The sequence spans 101 residues: Iron-sulfur cluster assembly protein CyaY (101 aa).

It belongs to the frataxin family.

Functionally, involved in iron-sulfur (Fe-S) cluster assembly. May act as a regulator of Fe-S biogenesis. This is Iron-sulfur cluster assembly protein CyaY from Haemophilus influenzae (strain PittEE).